The sequence spans 438 residues: UDP-N-acetylmuramoylalanine--D-glutamate ligase (438 aa).

Residue 112-118 participates in ATP binding; that stretch reads GSNGKST.

It belongs to the MurCDEF family.

Its subcellular location is the cytoplasm. It catalyses the reaction UDP-N-acetyl-alpha-D-muramoyl-L-alanine + D-glutamate + ATP = UDP-N-acetyl-alpha-D-muramoyl-L-alanyl-D-glutamate + ADP + phosphate + H(+). Its pathway is cell wall biogenesis; peptidoglycan biosynthesis. Cell wall formation. Catalyzes the addition of glutamate to the nucleotide precursor UDP-N-acetylmuramoyl-L-alanine (UMA). This chain is UDP-N-acetylmuramoylalanine--D-glutamate ligase, found in Pectobacterium atrosepticum (strain SCRI 1043 / ATCC BAA-672) (Erwinia carotovora subsp. atroseptica).